The sequence spans 86 residues: MANIKQQKKRNKTNEKRRLQNVSFKSSVKTVVKQVKTAVANADKQKALALLSVAYKKFDKGVSKRVYHANFSARNKSDLQKLVNTL.

A compositionally biased stretch (basic residues) spans 1 to 11; that stretch reads MANIKQQKKRN. A disordered region spans residues 1-21; that stretch reads MANIKQQKKRNKTNEKRRLQN.

The protein belongs to the bacterial ribosomal protein bS20 family.

Binds directly to 16S ribosomal RNA. The polypeptide is Small ribosomal subunit protein bS20 (Onion yellows phytoplasma (strain OY-M)).